Here is a 201-residue protein sequence, read N- to C-terminus: UPF0301 protein Mvan_6057 (201 aa).

It belongs to the UPF0301 (AlgH) family.

This is UPF0301 protein Mvan_6057 from Mycolicibacterium vanbaalenii (strain DSM 7251 / JCM 13017 / BCRC 16820 / KCTC 9966 / NRRL B-24157 / PYR-1) (Mycobacterium vanbaalenii).